Consider the following 146-residue polypeptide: VHLTAEEKSAVTALWGKVNVDEVGGEALGRLLVVYPWTQRFFDSFGDLSSPNAIMSNPKVKAHGKKVLNSFSDGLKNLDNLKGTFAKLSELHCDQLHVDPENFKLLGNVLVCVLAHHFGKEFTPQVQAAYQKVVAGVANALAHKYH.

The residue at position 1 (V1) is an N-acetylvaline. A Globin domain is found at 2 to 146 (HLTAEEKSAV…VANALAHKYH (145 aa)). At T12 the chain carries Phosphothreonine. Residue S44 is modified to Phosphoserine. The residue at position 59 (K59) is an N6-acetyllysine. A heme b-binding site is contributed by H63. K82 carries the post-translational modification N6-acetyllysine. H92 is a heme b binding site. C93 bears the S-nitrosocysteine mark. Position 144 is an N6-acetyllysine (K144).

This sequence belongs to the globin family. In terms of assembly, heterotetramer of two alpha chains and two beta chains. As to expression, red blood cells.

Functionally, involved in oxygen transport from the lung to the various peripheral tissues. In Leptonychotes weddellii (Weddell seal), this protein is Hemoglobin subunit beta (HBB).